We begin with the raw amino-acid sequence, 349 residues long: tRNA pseudouridine synthase D (349 aa).

A substrate-binding site is contributed by Phe27. Residue Asp80 is the Nucleophile of the active site. Asn129 lines the substrate pocket. Positions 155-303 (GVPNYFGAQR…VEAARRAMLL (149 aa)) constitute a TRUD domain. Phe329 serves as a coordination point for substrate.

It belongs to the pseudouridine synthase TruD family.

It carries out the reaction uridine(13) in tRNA = pseudouridine(13) in tRNA. In terms of biological role, responsible for synthesis of pseudouridine from uracil-13 in transfer RNAs. The polypeptide is tRNA pseudouridine synthase D (Shigella dysenteriae serotype 1 (strain Sd197)).